The sequence spans 240 residues: Eukaryotic translation initiation factor 3 subunit K (240 aa).

The region spanning 41–221 is the PCI domain; sequence YDKDIVLTIL…TIKTRNIDEK (181 aa).

This sequence belongs to the eIF-3 subunit K family. Component of the eukaryotic translation initiation factor 3 (eIF-3) complex.

It is found in the cytoplasm. Its function is as follows. Component of the eukaryotic translation initiation factor 3 (eIF-3) complex, which is involved in protein synthesis of a specialized repertoire of mRNAs and, together with other initiation factors, stimulates binding of mRNA and methionyl-tRNAi to the 40S ribosome. The eIF-3 complex specifically targets and initiates translation of a subset of mRNAs involved in cell proliferation. In Caenorhabditis briggsae, this protein is Eukaryotic translation initiation factor 3 subunit K.